Here is a 311-residue protein sequence, read N- to C-terminus: DNA-directed RNA polymerase subunit alpha (311 aa).

The interval 1-227 (MAQFQIECVE…NLFCSLRNLD (227 aa)) is alpha N-terminal domain (alpha-NTD). An alpha C-terminal domain (alpha-CTD) region spans residues 242–311 (ISQVLIEELQ…GISLPKEKTD (70 aa)).

The protein belongs to the RNA polymerase alpha chain family. As to quaternary structure, in plastids the minimal PEP RNA polymerase catalytic core is composed of four subunits: alpha, beta, beta', and beta''. When a (nuclear-encoded) sigma factor is associated with the core the holoenzyme is formed, which can initiate transcription.

It is found in the plastid. The protein resides in the chloroplast. It catalyses the reaction RNA(n) + a ribonucleoside 5'-triphosphate = RNA(n+1) + diphosphate. In terms of biological role, DNA-dependent RNA polymerase catalyzes the transcription of DNA into RNA using the four ribonucleoside triphosphates as substrates. In Porphyra purpurea (Red seaweed), this protein is DNA-directed RNA polymerase subunit alpha.